The sequence spans 761 residues: Translation initiation factor IF-2 (761 aa).

The interval 39-179 (DEETLNKAKQ…KVNHQQMPLP (141 aa)) is disordered. Residues 45–105 (KAKQAGKPAA…NNQQSQSQGQ (61 aa)) are compositionally biased toward low complexity. Polar residues predominate over residues 106–120 (TKRPSQASNNQSGAA). Residues 142–154 (PGSNNRRPGNNQN) show a composition bias toward low complexity. Residues 155–168 (RRNHGNRGGKRRPQ) show a composition bias toward basic residues. The region spanning 262 to 435 (ERPPVVTIMG…EVEEFKANPD (174 aa)) is the tr-type G domain. Residues 271–278 (GHVDHGKT) form a G1 region. 271–278 (GHVDHGKT) contributes to the GTP binding site. The tract at residues 296–300 (GITQH) is G2. The G3 stretch occupies residues 317–320 (DTPG). Residues 317–321 (DTPGH) and 371–374 (NKID) each bind GTP. Residues 371 to 374 (NKID) form a G4 region. The G5 stretch occupies residues 407-409 (SAL).

The protein belongs to the TRAFAC class translation factor GTPase superfamily. Classic translation factor GTPase family. IF-2 subfamily.

It is found in the cytoplasm. Functionally, one of the essential components for the initiation of protein synthesis. Protects formylmethionyl-tRNA from spontaneous hydrolysis and promotes its binding to the 30S ribosomal subunits. Also involved in the hydrolysis of GTP during the formation of the 70S ribosomal complex. The polypeptide is Translation initiation factor IF-2 (Shouchella clausii (strain KSM-K16) (Alkalihalobacillus clausii)).